The following is a 699-amino-acid chain: Extracellular matrix protein 2 (699 aa).

A signal peptide spans 1-20 (MKIAVLFCFFLLIIFQTDFG). Residues 101 to 158 (GHCLVKGITMYNKAVWSPEPCTTCLCSDGRVLCDETMCHPQRCPQTVIPEGECCPVCS) enclose the VWFC domain. Residues 176-186 (EFSGDSSEQRE) show a composition bias toward basic and acidic residues. The tract at residues 176–316 (EFSGDSSEQR…PAPPRGTLRL (141 aa)) is disordered. A compositionally biased stretch (acidic residues) spans 212–224 (QSEEDEEVKEEDT). Over residues 243–260 (GDSRGGDRKQRPGEERRL) the composition is skewed to basic and acidic residues. Positions 270–291 (EEEEDEEEEGEEGEEDEEDEED) are enriched in acidic residues. The short motif at 294 to 296 (RGD) is the Cell attachment site element. Residues 307–344 (PAPPRGTLRLPSGCSLSYRTISCINAMLTQIPPLTAPQ) enclose the LRRNT domain. LRR repeat units lie at residues 368–388 (NLER…GPKA), 394–415 (KLMR…LPST), 416–436 (LEEL…SLSD), 439–459 (QLVT…NPLA), 465–484 (SLAY…QGLP), 486–507 (SIEE…CFNH), 510–530 (KINV…APLA), 536–557 (NLES…LPKS), 558–578 (LLHL…VFGH), 582–602 (GLEY…DRVS), 609–630 (SLRE…IQEM), 632–653 (ALHF…EICN), and 661–684 (NLEH…TFSC). Residue Asn-378 is glycosylated (N-linked (GlcNAc...) asparagine). Residue Asn-449 is glycosylated (N-linked (GlcNAc...) asparagine). N-linked (GlcNAc...) asparagine glycosylation occurs at Asn-506.

The protein belongs to the small leucine-rich proteoglycan (SLRP) family. SLRP class I subfamily. In terms of assembly, interacts with numerous extracellular matrix proteins. Interacts with MSL1 and RASSF1. As to expression, expressed predominantly in adipose tissue as well as female-specific organs such as mammary gland, ovary, and uterus.

It is found in the secreted. It localises to the extracellular space. Its subcellular location is the extracellular matrix. Promotes matrix assembly and cell adhesiveness. In Homo sapiens (Human), this protein is Extracellular matrix protein 2 (ECM2).